The chain runs to 207 residues: Dephospho-CoA kinase (207 aa).

The 198-residue stretch at 10 to 207 folds into the DPCK domain; the sequence is ILGLTGGIGS…FYLTLRGGQS (198 aa). 18–23 provides a ligand contact to ATP; it reads GSGKSA.

The protein belongs to the CoaE family.

It localises to the cytoplasm. The catalysed reaction is 3'-dephospho-CoA + ATP = ADP + CoA + H(+). It participates in cofactor biosynthesis; coenzyme A biosynthesis; CoA from (R)-pantothenate: step 5/5. Catalyzes the phosphorylation of the 3'-hydroxyl group of dephosphocoenzyme A to form coenzyme A. This Pseudomonas syringae pv. tomato (strain ATCC BAA-871 / DC3000) protein is Dephospho-CoA kinase.